A 194-amino-acid polypeptide reads, in one-letter code: Peptidyl-tRNA hydrolase (194 aa).

Tyr-17 lines the tRNA pocket. His-22 (proton acceptor) is an active-site residue. TRNA-binding residues include Tyr-69, Asn-71, and Asn-117.

It belongs to the PTH family. Monomer.

It is found in the cytoplasm. The catalysed reaction is an N-acyl-L-alpha-aminoacyl-tRNA + H2O = an N-acyl-L-amino acid + a tRNA + H(+). In terms of biological role, hydrolyzes ribosome-free peptidyl-tRNAs (with 1 or more amino acids incorporated), which drop off the ribosome during protein synthesis, or as a result of ribosome stalling. Functionally, catalyzes the release of premature peptidyl moieties from peptidyl-tRNA molecules trapped in stalled 50S ribosomal subunits, and thus maintains levels of free tRNAs and 50S ribosomes. This chain is Peptidyl-tRNA hydrolase, found in Paenarthrobacter aurescens (strain TC1).